We begin with the raw amino-acid sequence, 288 residues long: Long chain fatty acid elongase 1 (288 aa).

7 helical membrane-spanning segments follow: residues 39–59 (FFAD…VVVF), 73–93 (LTIP…AGAV), 126–146 (WVWL…FLVL), 150–170 (PLMF…WYSH), 180–197 (GIYL…YYFL), 217–237 (IVQF…MHFT), and 247–267 (VFKL…NFFL).

It belongs to the ELO family.

It is found in the membrane. It catalyses the reaction (6Z,9Z,12Z)-octadecatrienoyl-CoA + malonyl-CoA + H(+) = (8Z,11Z,14Z)-3-oxoeicosatrienoyl-CoA + CO2 + CoA. It carries out the reaction (6Z,9Z,12Z,15Z)-octadecatetraenoyl-CoA + malonyl-CoA + H(+) = (8Z,11Z,14Z,17Z)-3-oxoicosatetraenoyl-CoA + CO2 + CoA. The enzyme catalyses (9Z)-hexadecenoyl-CoA + malonyl-CoA + H(+) = 3-oxo-(11Z)-octadecenoyl-CoA + CO2 + CoA. The protein operates within lipid metabolism; fatty acid biosynthesis. Its function is as follows. Catalyzes the first and rate-limiting reaction of the four reactions that constitute the long-chain fatty acids elongation cycle. Uses malonyl-CoA to add 2 carbons per cycle to the chain of long-chain fatty acids. Condensing enzyme that catalyzes the elongation of monounsaturated (MUFA) and polyunsaturated (PUFA) fatty acids that are involved in multiple biological processes as precursors of membrane lipids and lipid mediators. This Caenorhabditis elegans protein is Long chain fatty acid elongase 1.